Consider the following 185-residue polypeptide: MLNEIKAKTKERMLKTIQSFHDDIKGVRTGRASASLLDGIVVNIYGGHQKLNQVAGVSVIDNKTLSIKVWDISVVGEVKNAILNANLNLNPVVEGSTIRIALPDLTQETREKLVKLLHQFAENARIAIRNIRRDIMEETEKMKENKEISEDDFHGAKKEIQNITDDNIKKIDGELSIKEKDILNH.

This sequence belongs to the RRF family.

Its subcellular location is the cytoplasm. Responsible for the release of ribosomes from messenger RNA at the termination of protein biosynthesis. May increase the efficiency of translation by recycling ribosomes from one round of translation to another. This Wolbachia pipientis wMel protein is Ribosome-recycling factor.